The chain runs to 166 residues: MSNIEKQTGELQEKLIAVNRVSKTVKGGRIMSFTALTVVGDGNGRVGFGYGKAREVPAAIQKAMEKARRNMINVALNDGTLQHPVKGVHTGSRVFMQPASEGTGIIAGGAMRAVLEVAGVRNVLSKAYGSTNPINVVRATIDALANMKSPETVAAKRGKTVDEILG.

In terms of domain architecture, S5 DRBM spans 11-74 (LQEKLIAVNR…EKARRNMINV (64 aa)).

Belongs to the universal ribosomal protein uS5 family. As to quaternary structure, part of the 30S ribosomal subunit. Contacts proteins S4 and S8.

With S4 and S12 plays an important role in translational accuracy. In terms of biological role, located at the back of the 30S subunit body where it stabilizes the conformation of the head with respect to the body. The chain is Small ribosomal subunit protein uS5 from Actinobacillus succinogenes (strain ATCC 55618 / DSM 22257 / CCUG 43843 / 130Z).